The chain runs to 146 residues: Core protein D2 (146 aa).

Belongs to the orthopoxvirus OPG114 family. In terms of assembly, part of a complex composed of the kinase OPG054, OPG092, OPG100, OPG114, OPG115, OPG142 and OPG157.

The protein localises to the virion. In terms of biological role, late protein which is part of a large complex required for early virion morphogenesis. This complex participates in the formation of virosomes and the incorporation of virosomal contents into nascent immature virions. This chain is Core protein D2 (OPG114), found in Homo sapiens (Human).